The following is a 565-amino-acid chain: Genetic interactor of prohibitins 3, mitochondrial (565 aa).

One can recognise a CP-type G domain in the interval 129–315; sequence TDVLEKIPRG…IYDLPGFTTN (187 aa).

The protein belongs to the TRAFAC class YlqF/YawG GTPase family. GEP3 subfamily.

The protein resides in the mitochondrion. Its function is as follows. May be involved in the mitochondrial lipid metabolism. The protein is Genetic interactor of prohibitins 3, mitochondrial (GEP3) of Zygosaccharomyces rouxii (strain ATCC 2623 / CBS 732 / NBRC 1130 / NCYC 568 / NRRL Y-229).